We begin with the raw amino-acid sequence, 224 residues long: Enolase-phosphatase E1 (224 aa).

The protein belongs to the HAD-like hydrolase superfamily. MasA/MtnC family. In terms of assembly, monomer. The cofactor is Mg(2+).

The catalysed reaction is 5-methylsulfanyl-2,3-dioxopentyl phosphate + H2O = 1,2-dihydroxy-5-(methylsulfanyl)pent-1-en-3-one + phosphate. It participates in amino-acid biosynthesis; L-methionine biosynthesis via salvage pathway; L-methionine from S-methyl-5-thio-alpha-D-ribose 1-phosphate: step 3/6. The protein operates within amino-acid biosynthesis; L-methionine biosynthesis via salvage pathway; L-methionine from S-methyl-5-thio-alpha-D-ribose 1-phosphate: step 4/6. Its function is as follows. Bifunctional enzyme that catalyzes the enolization of 2,3-diketo-5-methylthiopentyl-1-phosphate (DK-MTP-1-P) into the intermediate 2-hydroxy-3-keto-5-methylthiopentenyl-1-phosphate (HK-MTPenyl-1-P), which is then dephosphorylated to form the acireductone 1,2-dihydroxy-3-keto-5-methylthiopentene (DHK-MTPene). This Thioalkalivibrio sulfidiphilus (strain HL-EbGR7) protein is Enolase-phosphatase E1.